We begin with the raw amino-acid sequence, 442 residues long: D-serine dehydratase 1 (442 aa).

Lysine 118 carries the post-translational modification N6-(pyridoxal phosphate)lysine.

This sequence belongs to the serine/threonine dehydratase family. DsdA subfamily. In terms of assembly, monomer. Requires pyridoxal 5'-phosphate as cofactor.

The catalysed reaction is D-serine = pyruvate + NH4(+). This is D-serine dehydratase 1 from Escherichia coli (strain UTI89 / UPEC).